Reading from the N-terminus, the 132-residue chain is Small ribosomal subunit protein uS8 (132 aa).

It belongs to the universal ribosomal protein uS8 family. Part of the 30S ribosomal subunit. Contacts proteins S5 and S12.

One of the primary rRNA binding proteins, it binds directly to 16S rRNA central domain where it helps coordinate assembly of the platform of the 30S subunit. This chain is Small ribosomal subunit protein uS8, found in Streptococcus pneumoniae (strain Taiwan19F-14).